A 90-amino-acid chain; its full sequence is Phosphocarrier protein NPr (90 aa).

Positions 2–90 (TQYRRVAIKN…ALFESGFDED (89 aa)) constitute an HPr domain. The Pros-phosphohistidine intermediate role is filled by His-16.

Belongs to the HPr family.

It is found in the cytoplasm. Functionally, component of the phosphoenolpyruvate-dependent nitrogen-metabolic phosphotransferase system (nitrogen-metabolic PTS), that seems to be involved in regulating nitrogen metabolism. The phosphoryl group from phosphoenolpyruvate (PEP) is transferred to the phosphoryl carrier protein NPr by enzyme I-Ntr. Phospho-NPr then transfers it to EIIA-Ntr. Could function in the transcriptional regulation of sigma-54 dependent operons in conjunction with the NPr (PtsO) and EIIA-Ntr (PtsN) proteins. The protein is Phosphocarrier protein NPr (ptsO) of Proteus mirabilis (strain HI4320).